The chain runs to 68 residues: UPF0352 protein CPS_2611 (68 aa).

It belongs to the UPF0352 family.

In Colwellia psychrerythraea (strain 34H / ATCC BAA-681) (Vibrio psychroerythus), this protein is UPF0352 protein CPS_2611.